We begin with the raw amino-acid sequence, 390 residues long: Queuine tRNA-ribosyltransferase (390 aa).

Asp-90 (proton acceptor) is an active-site residue. Substrate contacts are provided by residues 90-94 (DSGGF), Asp-144, Gln-197, and Gly-224. An RNA binding region spans residues 255–261 (GVGTPED). Residue Asp-274 is the Nucleophile of the active site. Positions 279–283 (TRNAR) are RNA binding; important for wobble base 34 recognition. 4 residues coordinate Zn(2+): Cys-312, Cys-314, Cys-317, and His-354.

Belongs to the queuine tRNA-ribosyltransferase family. In terms of assembly, homodimer. Within each dimer, one monomer is responsible for RNA recognition and catalysis, while the other monomer binds to the replacement base PreQ1. Requires Zn(2+) as cofactor.

The catalysed reaction is 7-aminomethyl-7-carbaguanine + guanosine(34) in tRNA = 7-aminomethyl-7-carbaguanosine(34) in tRNA + guanine. The protein operates within tRNA modification; tRNA-queuosine biosynthesis. Functionally, catalyzes the base-exchange of a guanine (G) residue with the queuine precursor 7-aminomethyl-7-deazaguanine (PreQ1) at position 34 (anticodon wobble position) in tRNAs with GU(N) anticodons (tRNA-Asp, -Asn, -His and -Tyr). Catalysis occurs through a double-displacement mechanism. The nucleophile active site attacks the C1' of nucleotide 34 to detach the guanine base from the RNA, forming a covalent enzyme-RNA intermediate. The proton acceptor active site deprotonates the incoming PreQ1, allowing a nucleophilic attack on the C1' of the ribose to form the product. After dissociation, two additional enzymatic reactions on the tRNA convert PreQ1 to queuine (Q), resulting in the hypermodified nucleoside queuosine (7-(((4,5-cis-dihydroxy-2-cyclopenten-1-yl)amino)methyl)-7-deazaguanosine). The polypeptide is Queuine tRNA-ribosyltransferase (Leptothrix cholodnii (strain ATCC 51168 / LMG 8142 / SP-6) (Leptothrix discophora (strain SP-6))).